The primary structure comprises 73 residues: MSKLGVLLTICLLLFPLTALPMDGDQSVDRPAERMQDDISSGQHPLFNQKRRCCGEGASCPRYFRNSQICSCC.

A signal peptide spans 1 to 19 (MSKLGVLLTICLLLFPLTA). A propeptide spanning residues 20 to 51 (LPMDGDQSVDRPAERMQDDISSGQHPLFNQKR) is cleaved from the precursor. Cystine bridges form between cysteine 53-cysteine 72, cysteine 54-cysteine 70, and cysteine 60-cysteine 73.

It belongs to the conotoxin M superfamily. As to expression, expressed by the venom duct.

It localises to the secreted. Its function is as follows. Shows a paralytic effect in fish. The protein is Conotoxin CnIIIF of Conus consors (Singed cone).